The sequence spans 129 residues: Flagellar assembly factor FliW (129 aa).

This sequence belongs to the FliW family. As to quaternary structure, interacts with translational regulator CsrA and flagellin(s).

The protein localises to the cytoplasm. In terms of biological role, acts as an anti-CsrA protein, binds CsrA and prevents it from repressing translation of its target genes, one of which is flagellin. Binds to flagellin and participates in the assembly of the flagellum. This is Flagellar assembly factor FliW from Campylobacter jejuni subsp. doylei (strain ATCC BAA-1458 / RM4099 / 269.97).